The chain runs to 898 residues: Alanine--tRNA ligase (898 aa).

Residues H582, H586, C685, and H689 each contribute to the Zn(2+) site.

Belongs to the class-II aminoacyl-tRNA synthetase family. Zn(2+) is required as a cofactor.

The protein resides in the cytoplasm. It catalyses the reaction tRNA(Ala) + L-alanine + ATP = L-alanyl-tRNA(Ala) + AMP + diphosphate. Functionally, catalyzes the attachment of alanine to tRNA(Ala) in a two-step reaction: alanine is first activated by ATP to form Ala-AMP and then transferred to the acceptor end of tRNA(Ala). Also edits incorrectly charged Ser-tRNA(Ala) and Gly-tRNA(Ala) via its editing domain. This chain is Alanine--tRNA ligase, found in Mycolicibacterium gilvum (strain PYR-GCK) (Mycobacterium gilvum (strain PYR-GCK)).